Reading from the N-terminus, the 527-residue chain is Peptidoglycan O-acetyltransferase (527 aa).

The next 11 helical transmembrane spans lie at 11-31 (VFVL…VGFL), 55-75 (LFFY…SIVF), 96-116 (LILG…TDFF), 131-151 (LHLI…AYLM), 187-207 (HFLD…GPIV), 228-248 (NIAL…VIAD), 280-300 (LYFD…FFNI), 352-372 (LILV…FIIW), 397-417 (MPKI…WVFF), 463-483 (IMYA…SFCL), and 505-525 (LLLS…FLYF). His-363 is a catalytic residue.

The protein belongs to the membrane-bound acyltransferase family.

The protein localises to the cell membrane. Its function is as follows. Catalyzes the O-acetylation of peptidoglycan (PG), an important mechanism that appears to confer lysozyme resistance and contributes to pathogen persistence in the host. This Helicobacter pylori (strain ATCC 700392 / 26695) (Campylobacter pylori) protein is Peptidoglycan O-acetyltransferase (patA).